A 189-amino-acid polypeptide reads, in one-letter code: Peptidyl-tRNA hydrolase (189 aa).

Y15 contributes to the tRNA binding site. The Proton acceptor role is filled by H20. The tRNA site is built by Y65, N67, and N113.

Belongs to the PTH family. Monomer.

The protein localises to the cytoplasm. The catalysed reaction is an N-acyl-L-alpha-aminoacyl-tRNA + H2O = an N-acyl-L-amino acid + a tRNA + H(+). Functionally, hydrolyzes ribosome-free peptidyl-tRNAs (with 1 or more amino acids incorporated), which drop off the ribosome during protein synthesis, or as a result of ribosome stalling. Its function is as follows. Catalyzes the release of premature peptidyl moieties from peptidyl-tRNA molecules trapped in stalled 50S ribosomal subunits, and thus maintains levels of free tRNAs and 50S ribosomes. This chain is Peptidyl-tRNA hydrolase, found in Caldicellulosiruptor saccharolyticus (strain ATCC 43494 / DSM 8903 / Tp8T 6331).